Reading from the N-terminus, the 339-residue chain is 7,8-didemethyl-8-hydroxy-5-deazariboflavin synthase (339 aa).

The Radical SAM core domain maps to 13 to 258 (ITYSKNIFIP…RDTDVSIQVP (246 aa)). Cys27, Cys31, and Cys34 together coordinate [4Fe-4S] cluster.

It belongs to the radical SAM superfamily. CofG family. Consists of two subunits, CofG and CofH. It depends on [4Fe-4S] cluster as a cofactor.

The catalysed reaction is 5-amino-5-(4-hydroxybenzyl)-6-(D-ribitylimino)-5,6-dihydrouracil + S-adenosyl-L-methionine = 7,8-didemethyl-8-hydroxy-5-deazariboflavin + 5'-deoxyadenosine + L-methionine + NH4(+) + H(+). It functions in the pathway cofactor biosynthesis; coenzyme F0 biosynthesis. Functionally, catalyzes the radical-mediated synthesis of 7,8-didemethyl-8-hydroxy-5-deazariboflavin from 5-amino-5-(4-hydroxybenzyl)-6-(D-ribitylimino)-5,6-dihydrouracil. This is 7,8-didemethyl-8-hydroxy-5-deazariboflavin synthase from Methanobrevibacter smithii (strain ATCC 35061 / DSM 861 / OCM 144 / PS).